A 378-amino-acid polypeptide reads, in one-letter code: MTEQLQMTRRTMLAGAALAGAVAPLLHTAQAHAAGAAAAAGAAPVDISTLPRVKVDLVKPPFVHAHDQVAKTGPRVVEFTMTIEEKKLVIDREGTEIHAMTFNGSVPGPLMVVHENDYVELRLINPDTNTLLHNIDFHAATGALGGGALTQVNPGEETTLRFKATKPGVFVYHCAPEGMVPWHVTSGMNGAIMVLPRDGLKDEKGQPLTYDKIYYVGEQDFYVPKDEAGNYKKYETPGEAYEDAVKAMRTLTPTHIVFNGAVGALTGDHALTAAVGERVLVVHSQANRDTRPHLIGGHGDYVWATGKFRNPPDLDQETWLIPGGTAGAAFYTFRQPGVYAYVNHNLIEAFELGAAGHFKVTGEWNDDLMTSVVKPASM.

Positions 1 to 38 (MTEQLQMTRRTMLAGAALAGAVAPLLHTAQAHAAGAAA) form a signal peptide, tat-type signal. 2 Plastocyanin-like domains span residues 39 to 213 (AAGA…YDKI) and 214 to 378 (YYVG…PASM). Positions 133, 138, 173, 174, 183, 188, and 344 each coordinate Cu cation.

It belongs to the multicopper oxidase family. In terms of assembly, homotrimer. Requires Cu(+) as cofactor. It depends on Cu(2+) as a cofactor. FAD serves as cofactor. In terms of processing, predicted to be exported by the Tat system. The position of the signal peptide cleavage has been experimentally proven.

It localises to the periplasm. The catalysed reaction is nitric oxide + Fe(III)-[cytochrome c] + H2O = Fe(II)-[cytochrome c] + nitrite + 2 H(+). The protein operates within nitrogen metabolism; nitrate reduction (denitrification); dinitrogen from nitrate: step 2/4. In Achromobacter cycloclastes, this protein is Copper-containing nitrite reductase (nirK).